Consider the following 291-residue polypeptide: Light-independent protochlorophyllide reductase iron-sulfur ATP-binding protein (291 aa).

ATP contacts are provided by residues 10-15 (GIGKST) and lysine 39. Residue serine 14 coordinates Mg(2+). 2 residues coordinate [4Fe-4S] cluster: cysteine 95 and cysteine 129. 180-181 (NR) provides a ligand contact to ATP.

This sequence belongs to the NifH/BchL/ChlL family. In terms of assembly, homodimer. Protochlorophyllide reductase is composed of three subunits; ChlL, ChlN and ChlB. It depends on [4Fe-4S] cluster as a cofactor.

It is found in the plastid. The protein localises to the chloroplast. It catalyses the reaction chlorophyllide a + oxidized 2[4Fe-4S]-[ferredoxin] + 2 ADP + 2 phosphate = protochlorophyllide a + reduced 2[4Fe-4S]-[ferredoxin] + 2 ATP + 2 H2O. It functions in the pathway porphyrin-containing compound metabolism; chlorophyll biosynthesis (light-independent). Its function is as follows. Component of the dark-operative protochlorophyllide reductase (DPOR) that uses Mg-ATP and reduced ferredoxin to reduce ring D of protochlorophyllide (Pchlide) to form chlorophyllide a (Chlide). This reaction is light-independent. The L component serves as a unique electron donor to the NB-component of the complex, and binds Mg-ATP. In Pinus thunbergii (Japanese black pine), this protein is Light-independent protochlorophyllide reductase iron-sulfur ATP-binding protein.